Reading from the N-terminus, the 261-residue chain is MSESLHLTRNGPILEITLDRPKANAIDAKTSFAMGEAFLNFRDDPELRVAIITGGGEKFFSAGWDLKAAAEGEAPDADFGPGGFAGLTEIFDLDKPVIAAVNGYAFGGGFELALAADFIVCAENASFALPEAKLGIVPDSGGVLRLPKLLPPAIVNEMVMTGRRMSAEEALRWGIVNRVVSQSELMDSARELAQQLVNSAPLAIAALKEIYRATSEMPVEEGYRYIRSGVLKHYPSVLHSEDALEGPQAFAEKRDPVWKGR.

The Nucleophile role is filled by Glu-111. Glu-131 acts as the Proton acceptor in catalysis.

This sequence belongs to the enoyl-CoA hydratase/isomerase family.

The catalysed reaction is (R)-carnitinyl-CoA = crotonobetainyl-CoA + H2O. It participates in amine and polyamine metabolism; carnitine metabolism. Its function is as follows. Catalyzes the reversible dehydration of L-carnitinyl-CoA to crotonobetainyl-CoA. This Salmonella paratyphi C (strain RKS4594) protein is Carnitinyl-CoA dehydratase.